Here is a 1687-residue protein sequence, read N- to C-terminus: MTDPLLDSQPASSTGEMDGLCPELLLIPPPLSNRGILGPVQSPCPSRDPAPIPTEPGCLLVEATATEEGPGNMEIIVETVAGTLTPGAPGETPAPKLPPGEREPSQEAGTPLPGQETAEEENVEKEEKSDTQKDSQKAVDKGQGAQRLEGDVVSGTESLFKTHMCPECKRCFKKRTHLVEHLHLHFPDPSLQCPNCQKFFTSKSKLKTHLLRELGEKAHHCPLCHYSAVERNALNRHMASMHEDISNFYSDTYACPVCREEFRLSQALKEHLKSHTAAAAAEPLPLRCFQEGCSYAAPDRKAFIKHLKETHGVRAVECRHHSCPMLFATAEAMEAHHKSHYAFHCPHCDFACSNKHLFRKHKKQGHPGSEELRCTFCPFATFNPVAYQDHVGKMHAHEKIHQCPECNFATAHKRVLIRHMLLHTGEKPHKCELCDFTCRDVSYLSKHMLTHSNTKDYMCTECGYVTKWKHYLRVHMRKHAGDLRYQCNQCSYRCHRADQLSSHKLRHQGKSLMCEVCAFACKRKYELQKHMASQHHPGTPAPLYPCHYCSYQSRHKQAVLSHENCKHTRLREFHCALCDYRTFSNTTLLFHKRKAHGYVPGDQAWQLRYASQEPEGAMQGPTPPPDSEPSNQLSARPEGPGHEPGTVVDPSLDQALPEMSEEVNTGRQEGSEAPHGGDLGGSPSPAEVEEGSCTLHLEALGVELESVTEPPLEEVTETAPMEFRPLGLEGPDGLEGPELSSFEGIGTSDLSAEENPLLEKPVSEPSTNPPSLEEAPNNWVGTFKTTPPAETAPLPPLPESESLLKALRRQDKEQAEALVLEGRVQMVVIQGEGRAFRCPHCPFITRREKALNLHSRTGCQGRREPLLCPECGASFKQQRGLSTHLLKKCPVLLRKNKGLPRPDSPIPLQPVLPGTQASEDTESGKPPPASQEAELLLPKDAPLELPREPEETEEPLATVSGSPVPPAGNSLPTEAPKKHCFDPVPPAGNSSPTEAPKKHHLDPVPPAGNSSPTEALKKHRFEQGKFHCNSCPFLCSRLSSITSHVAEGCRGGRGGGGKRGTPQTQPDVSPLSNGDSAPPKNGSTESSSGDGDTVLVQKQKGARFSCPTCPFSCQQERALRTHQIRGCPLEESGELHCSLCPFTAPAATALRLHQKRRHPTAAPARGPRPHLQCGDCGFTCKQSRCMQQHRRLKHEGVKPHQCPFCDFSTTRRYRLEAHQSRHTGIGRIPCSSCPQTFGTNSKLRLHRLRVHDKTPTHFCPLCDYSGYLRHDITRHVNSCHQGTPAFACSQCEAQFSSETALKQHALRRHPEPAQPAPGSPAETTEGPLHCSRCGLLCPSPASLRGHTRKQHPRLECGACQEAFPSRLALDEHRRQQHFSHRCQLCDFAARERVGLVKHYLEQHEETSAAVAASDGDGDAGQPPLHCPFCDFTCRHQLVLDHHVKGHGGTRLYKCTDCAYSTKNRQKITWHSRIHTGEKPYHCHLCPYACADPSRLKYHMRIHKEERKYLCPECGYKCKWVNQLKYHMTKHTGLKPYQCPECEYCTNRADALRVHQETRHREARAFMCEQCGKAFKTRFLLRTHLRKHSEAKPYVCNVCHRAFRWAAGLRHHALTHTDRHPFFCRLCNYKAKQKFQVVKHVRRHHPDQADPNQGVGKDPTTPTVHLHDVQLEDPSPPAPAAPHTGPEG.

Disordered stretches follow at residues 1 to 23 and 83 to 150; these read MTDP…LCPE and TLTP…RLEG. Over residues 125–140 the composition is skewed to basic and acidic residues; that stretch reads KEEKSDTQKDSQKAVD. Position 154 is a phosphoserine (Ser-154). 3 consecutive C2H2-type zinc fingers follow at residues 163–185, 219–242, and 253–275; these read HMCP…LHLH, HHCP…ASMH, and YACP…LKSH. A C2H2-type 4; atypical zinc finger spans residues 286 to 311; it reads LRCFQEGCSYAAPDRKAFIKHLKETH. C2H2-type zinc fingers lie at residues 316–340, 343–366, 372–395, 401–423, 429–451, 457–479, 485–507, 512–536, 544–567, and 573–596; these read VECR…HKSH, FHCP…KQGH, LRCT…GKMH, HQCP…MLLH, HKCE…MLTH, YMCT…MRKH, YQCN…KLRH, LMCE…SQHH, YPCH…NCKH, and FHCA…RKAH. Residue Lys-594 forms a Glycyl lysine isopeptide (Lys-Gly) (interchain with G-Cter in SUMO2) linkage. Disordered regions lie at residues 613 to 690, 704 to 798, 897 to 935, 947 to 1014, and 1052 to 1092; these read EPEG…EVEE, LESV…PPLP, KGLP…EAEL, REPE…SPTE, and GRGG…GDGD. The span at 725–739 shows a compositional bias: low complexity; that stretch reads PLGLEGPDGLEGPEL. The segment covering 1061–1075 has biased composition (polar residues); sequence TPQTQPDVSPLSNGD. Residues 1082–1092 show a composition bias toward low complexity; sequence GSTESSSGDGD. 15 consecutive C2H2-type zinc fingers follow at residues 1135–1158, 1171–1194, 1200–1222, 1228–1251, 1257–1280, 1286–1309, 1328–1351, 1354–1377, 1380–1403, 1424–1446, 1452–1474, 1480–1502, 1508–1530, 1536–1559, and 1565–1587; these read LHCS…KRRH, LQCG…RLKH, HQCP…QSRH, IPCS…LRVH, HFCP…NSCH, FACS…LRRH, LHCS…RKQH, LECG…RQQH, HRCQ…LEQH, LHCP…VKGH, YKCT…SRIH, YHCH…MRIH, YLCP…MTKH, YQCP…ETRH, and FMCE…LRKH. Lys-1193 is covalently cross-linked (Glycyl lysine isopeptide (Lys-Gly) (interchain with G-Cter in SUMO2)). Residue Lys-1242 forms a Glycyl lysine isopeptide (Lys-Gly) (interchain with G-Cter in SUMO2) linkage. Lys-1591 participates in a covalent cross-link: Glycyl lysine isopeptide (Lys-Gly) (interchain with G-Cter in SUMO2). 2 C2H2-type zinc fingers span residues 1593–1615 and 1621–1643; these read YVCN…ALTH and FFCR…VRRH. The segment at 1638–1687 is disordered; the sequence is KHVRRHHPDQADPNQGVGKDPTTPTVHLHDVQLEDPSPPAPAAPHTGPEG.

This sequence belongs to the krueppel C2H2-type zinc-finger protein family.

Its subcellular location is the nucleus. In terms of biological role, may be involved in transcriptional regulation. This is Zinc finger protein 142 from Homo sapiens (Human).